We begin with the raw amino-acid sequence, 106 residues long: Large ribosomal subunit protein uL23 (106 aa).

This sequence belongs to the universal ribosomal protein uL23 family. In terms of assembly, part of the 50S ribosomal subunit. Contacts protein L29, and trigger factor when it is bound to the ribosome.

Its function is as follows. One of the early assembly proteins it binds 23S rRNA. One of the proteins that surrounds the polypeptide exit tunnel on the outside of the ribosome. Forms the main docking site for trigger factor binding to the ribosome. This is Large ribosomal subunit protein uL23 from Neisseria meningitidis serogroup C / serotype 2a (strain ATCC 700532 / DSM 15464 / FAM18).